A 225-amino-acid polypeptide reads, in one-letter code: MIKMLEGYYIIENPGVVPAERRFRMKDLKAWGYDLHLGTIEGERAYFISKTGERHEGETYIFKGKEYHVSRTQKEIPENARLLARIIIERGNPYLEVWLEEEDVKFPLTKEDPRIILKRIWEKEKLNQLLKHVRAVGLTTDFYKDNVFTQGIPLPYEEYPPKVRRVLREVKDIHRDLTGFGRFVFQYFGEVDKMHNYRLYWTLPTLHLFDIDIANEVDKVLGMLD.

The protein belongs to the UPF0128 family.

In Pyrococcus horikoshii (strain ATCC 700860 / DSM 12428 / JCM 9974 / NBRC 100139 / OT-3), this protein is UPF0128 protein PH1314.